We begin with the raw amino-acid sequence, 250 residues long: uncharacterized protein (250 aa).

The NAD(+) site is built by Ser15, Leu17, Asp36, Asp56, Val57, and Cys82. Position 143 (Ser143) interacts with substrate. The NAD(+) site is built by Tyr156, Lys160, Phe189, and Thr191. Tyr156 acts as the Proton acceptor in catalysis.

Belongs to the short-chain dehydrogenases/reductases (SDR) family.

This is an uncharacterized protein from Mycobacterium tuberculosis (strain CDC 1551 / Oshkosh).